We begin with the raw amino-acid sequence, 828 residues long: Periplasmic nitrate reductase (828 aa).

The segment at residues 1 to 33 (MKLSRRDFMKANAAVAAAAAAGLTIPTVVQAAA) is a signal peptide (tat-type signal). Residues 39–95 (IKWDKAPCRFCGTGCGVLVGTQNGRIVASQGDPEAAVNRGLSCIKGYFLPKIMYGKD) enclose the 4Fe-4S Mo/W bis-MGD-type domain. Residues cysteine 46, cysteine 49, cysteine 53, and cysteine 81 each contribute to the [4Fe-4S] cluster site. Mo-bis(molybdopterin guanine dinucleotide) contacts are provided by residues lysine 83, glutamine 150, asparagine 175, cysteine 179, 212 to 219 (WGSNMAEM), 243 to 247 (STFEH), 262 to 264 (QTD), methionine 372, glutamine 376, asparagine 482, 508 to 509 (SD), lysine 531, aspartate 558, and 718 to 727 (TGRVLEHWHT). Phenylalanine 794 provides a ligand contact to substrate. Positions 802 and 819 each coordinate Mo-bis(molybdopterin guanine dinucleotide).

The protein belongs to the prokaryotic molybdopterin-containing oxidoreductase family. NasA/NapA/NarB subfamily. As to quaternary structure, component of the periplasmic nitrate reductase NapAB complex composed of NapA and NapB. [4Fe-4S] cluster serves as cofactor. It depends on Mo-bis(molybdopterin guanine dinucleotide) as a cofactor. In terms of processing, predicted to be exported by the Tat system. The position of the signal peptide cleavage has not been experimentally proven.

It localises to the periplasm. It catalyses the reaction 2 Fe(II)-[cytochrome] + nitrate + 2 H(+) = 2 Fe(III)-[cytochrome] + nitrite + H2O. Catalytic subunit of the periplasmic nitrate reductase complex NapAB. Receives electrons from NapB and catalyzes the reduction of nitrate to nitrite. The polypeptide is Periplasmic nitrate reductase (Serratia proteamaculans (strain 568)).